The chain runs to 303 residues: D-alanine--D-alanine ligase (303 aa).

The region spanning 104–300 (KLLWNAVGLP…FERLVERVLE (197 aa)) is the ATP-grasp domain. 132-187 (IAKLGLPLFVKPASEGSSVGVSKVKTAEQLLPAIEEALKYDSIVLVEENLAGAEYS) is an ATP binding site. Residues D254, E267, and N269 each contribute to the Mg(2+) site.

This sequence belongs to the D-alanine--D-alanine ligase family. Mg(2+) serves as cofactor. Mn(2+) is required as a cofactor.

It is found in the cytoplasm. The catalysed reaction is 2 D-alanine + ATP = D-alanyl-D-alanine + ADP + phosphate + H(+). The protein operates within cell wall biogenesis; peptidoglycan biosynthesis. Its function is as follows. Cell wall formation. The protein is D-alanine--D-alanine ligase of Glaesserella parasuis serovar 5 (strain SH0165) (Haemophilus parasuis).